Here is a 339-residue protein sequence, read N- to C-terminus: MTCTFHAYEQLHAQPEVVAAVHTLLREVEQADGVAALGEAFLKGIDGDHGHQHIVAMTDERVVGVLALDGAVTASVSGENPTAELAVAPDVRRQGVARGMLAAAREDLGLTGPLDTWAHGDLAPARAMAEAANARRTRELHKMAVDASPGSDRGEQFRAGAEDAASKVESQGLTVLTYPEAVERFGEELVDEEWVRVNNEAFAWHPEQGGWDIDQLRSARDTAWFDPNGVLMVWSCGEDEDAAGPRCAGFHWTKIPTEEQEEPEGERAGEVYVVCLADEARGKGLGPAITMLGIGELMKRGVGTVELYVEGDNGPAVATYEGLGFGIVHTDVVYRGELN.

2 consecutive N-acetyltransferase domains span residues 8–174 (YEQL…QGLT) and 176–339 (LTYP…GELN). Glutamate 39 serves as a coordination point for 1D-myo-inositol 2-(L-cysteinylamino)-2-deoxy-alpha-D-glucopyranoside. Position 85–87 (85–87 (LAV)) interacts with acetyl-CoA. Glutamate 207, lysine 254, and glutamate 270 together coordinate 1D-myo-inositol 2-(L-cysteinylamino)-2-deoxy-alpha-D-glucopyranoside. 274 to 276 (VCL) serves as a coordination point for acetyl-CoA. 1D-myo-inositol 2-(L-cysteinylamino)-2-deoxy-alpha-D-glucopyranoside is bound at residue tyrosine 308.

Belongs to the acetyltransferase family. MshD subfamily. As to quaternary structure, monomer.

The catalysed reaction is 1D-myo-inositol 2-(L-cysteinylamino)-2-deoxy-alpha-D-glucopyranoside + acetyl-CoA = mycothiol + CoA + H(+). Functionally, catalyzes the transfer of acetyl from acetyl-CoA to desacetylmycothiol (Cys-GlcN-Ins) to form mycothiol. This is Mycothiol acetyltransferase from Corynebacterium urealyticum (strain ATCC 43042 / DSM 7109).